We begin with the raw amino-acid sequence, 134 residues long: Small ribosomal subunit protein uS8c (134 aa).

In terms of assembly, component of the chloroplast small ribosomal subunit (SSU). Mature 70S chloroplast ribosomes of higher plants consist of a small (30S) and a large (50S) subunit. The 30S small subunit contains 1 molecule of ribosomal RNA (16S rRNA) and 24 different proteins. The 50S large subunit contains 3 rRNA molecules (23S, 5S and 4.5S rRNA) and 33 different proteins.

It is found in the plastid. The protein resides in the chloroplast. Functionally, component of the chloroplast ribosome (chloro-ribosome), a dedicated translation machinery responsible for the synthesis of chloroplast genome-encoded proteins, including proteins of the transcription and translation machinery and components of the photosynthetic apparatus. This Spinacia oleracea (Spinach) protein is Small ribosomal subunit protein uS8c (rps8).